Consider the following 181-residue polypeptide: NAD(P)H-quinone oxidoreductase subunit I, chloroplastic (181 aa).

4Fe-4S ferredoxin-type domains are found at residues 52 to 81 and 92 to 121; these read GRIH…VDWE and KSYS…MTEE. 8 residues coordinate [4Fe-4S] cluster: C61, C64, C67, C71, C101, C104, C107, and C111.

The protein belongs to the complex I 23 kDa subunit family. As to quaternary structure, NDH is composed of at least 16 different subunits, 5 of which are encoded in the nucleus. The cofactor is [4Fe-4S] cluster.

Its subcellular location is the plastid. It is found in the chloroplast thylakoid membrane. It catalyses the reaction a plastoquinone + NADH + (n+1) H(+)(in) = a plastoquinol + NAD(+) + n H(+)(out). The enzyme catalyses a plastoquinone + NADPH + (n+1) H(+)(in) = a plastoquinol + NADP(+) + n H(+)(out). In terms of biological role, NDH shuttles electrons from NAD(P)H:plastoquinone, via FMN and iron-sulfur (Fe-S) centers, to quinones in the photosynthetic chain and possibly in a chloroplast respiratory chain. The immediate electron acceptor for the enzyme in this species is believed to be plastoquinone. Couples the redox reaction to proton translocation, and thus conserves the redox energy in a proton gradient. The polypeptide is NAD(P)H-quinone oxidoreductase subunit I, chloroplastic (Zygnema circumcarinatum (Green alga)).